The primary structure comprises 27 residues: Bombinin-like peptide 2 (27 aa).

Asparagine amide is present on Asn27.

The protein belongs to the bombinin family. Expressed by the skin glands.

The protein resides in the secreted. Functionally, has antimicrobial activity, but no hemolytic activity. Preference on killing Gram-negative non-enteric bacteria. The sequence is that of Bombinin-like peptide 2 from Bombina orientalis (Oriental fire-bellied toad).